The chain runs to 149 residues: Down syndrome critical region protein 9 (149 aa).

Positions 1–41 are disordered; that stretch reads MGRICPVNSRARRLRARPGRPSGDSLPYHQLQGGAPRLWSP.

The protein is Down syndrome critical region protein 9 (DSCR9) of Pan troglodytes (Chimpanzee).